Reading from the N-terminus, the 701-residue chain is MAFEENFLSAQVLYQLSWNGKLEHPHIIDVEYASDQGGLRLRDVKERLTRLRGHGINDSFSWSYKRTYSKTFIWNDLSDDDVIHPLCGSGEYVLRASELIDTNERKSCDVHSRHSNKSMQSSPTMLLDNVTSKQDTIIGDVHFGALESGENRRIGDKLNCLVRNSGANLEEVKSLRGVSAVISQSLPTLYADQEIMDVEKSDFCLSSSDTEISPRPKMTVDSIKPVKDVNLVVMTKSSTVHGVHTPPSPSLKSSTELPFSPGGTKRLWEKEIRKSLFRTRNSSNVNSVSTEDFTAVHMELPPNTHSTHEDNSFWRDSRSKSPSPSSLNELKEVQIDKEEVEQSTSQLIRLLWARWTGGSSKGKRIPYNTCEGASTKIPESKHNSPYRTKSPYKEIRSTHVEGSHQETRQSLAVQSKARVSLEIKEILPPEECMHYPSPMTVQNVTEVASPHAQTDGGGDVCTIKTIVSEQASQPYPEPRDLRTDQGILSEKTPGLHIAVLEGLTSDAPSGPAEAEVDTPLPAVARAKTGNTLSKLKTIASSKPLPPGFHKGTNDTKPVQITPRRTPRNSIPLASPPLVRSFSRDAVRGFSSLAAISLCPDKDSVACTPSPEKTIVKKRINYSAREEMPLVPGLTTLDWEKALQEATTDCLPPPNFSDILQECSICRRTFKPDSLQVHMRGCHPPQYARAFSARASPHVVRC.

The tract at residues 8 to 101 is DIX-like oligomerization domain; it reads LSAQVLYQLS…YVLRASELID (94 aa). Disordered stretches follow at residues 238–262, 300–329, 366–389, and 538–575; these read STVH…FSPG, LPPN…SLNE, PYNT…YRTK, and IASS…LASP. Residues 306 to 319 show a composition bias toward basic and acidic residues; sequence STHEDNSFWRDSRS. Residues 658–687 form a C2HC/C3H-type zinc finger; it reads ILQECSICRRTFKPDSLQVHMRGCHPPQYA. Zn(2+) is bound by residues Cys-662, Cys-665, His-677, and Cys-681.

The protein belongs to the SOSEKI family. Homodimer. Forms long polymer filaments with other SOKs proteins polymers crucial for polar localization and biological activity. Zn(2+) is required as a cofactor.

It localises to the cell membrane. In terms of biological role, SOSEKI proteins locally interpret global polarity cues and can influence cell division orientation to coordinate cell polarization relative to body axes. This is Protein SOSEKI 1 from Physcomitrium patens (Spreading-leaved earth moss).